We begin with the raw amino-acid sequence, 1483 residues long: Ubiquitin fusion degradation protein 4 (1483 aa).

Positions 1-117 (MSENNSHNLD…NNEFGSNPLH (117 aa)) are disordered. A compositionally biased stretch (basic and acidic residues) spans 8–18 (NLDEHESHSEN). Over residues 61 to 70 (EADDGEDDDN) the composition is skewed to acidic residues. Position 87 is a phosphothreonine (Thr87). A Glycyl lysine isopeptide (Lys-Gly) (interchain with G-Cter in ubiquitin) cross-link involves residue Lys349. Positions 1007–1081 (CGVKSDSFIN…LIQLWKNKSK (75 aa)) are K-box. The HECT domain maps to 1376–1483 (AEHGYTMDSS…EEGAGAFLLS (108 aa)). Cys1450 (glycyl thioester intermediate) is an active-site residue.

The protein belongs to the UPL family. K-HECT subfamily.

The catalysed reaction is S-ubiquitinyl-[E2 ubiquitin-conjugating enzyme]-L-cysteine + [acceptor protein]-L-lysine = [E2 ubiquitin-conjugating enzyme]-L-cysteine + N(6)-ubiquitinyl-[acceptor protein]-L-lysine.. Its function is as follows. E3 ubiquitin-protein ligase which accepts ubiquitin from an E2 ubiquitin-conjugating enzyme in the form of a thioester and then directly transfers the ubiquitin to targeted substrates. The sequence is that of Ubiquitin fusion degradation protein 4 (UFD4) from Saccharomyces cerevisiae (strain ATCC 204508 / S288c) (Baker's yeast).